The primary structure comprises 692 residues: Protein artemis (692 aa).

Thr380 is subject to Phosphothreonine. At Ser385 the chain carries Phosphoserine. 2 disordered regions span residues 504–555 (LENF…DSQS) and 640–664 (STNADSQSSSDFEVPSTPEAELPKR). Polar residues predominate over residues 506-520 (NFPSSTVAGGSQSPK). Residues 530–543 (THISSQNSSQSTHI) show a composition bias toward low complexity. Polar residues-rich tracts occupy residues 544 to 555 (TEQGSQGWDSQS) and 640 to 650 (STNADSQSSSD). The residue at position 645 (Ser645) is a Phosphoserine; by ATM.

The protein belongs to the DNA repair metallo-beta-lactamase (DRMBL) family. As to quaternary structure, interacts with LIG4; the interaction is direct. Interacts with ATM. Interacts with BRCA1. Interacts with PRKDC. Interacts with TP53BP1. Also exhibits ATM- and phosphorylation-dependent interaction with the MRN complex, composed of MRE11, RAD50, and NBN. Phosphorylation on undefined residues by PRKDC may stimulate endonucleolytic activity on 5' and 3' hairpins and overhangs. PRKDC must remain present, even after phosphorylation, for efficient hairpin opening. Also phosphorylated by ATM in response to ionizing radiation (IR) and by ATR in response to ultraviolet (UV) radiation. In terms of tissue distribution, ubiquitously expressed, with highest levels in the kidney, lung, pancreas and placenta (at the mRNA level). Expression is not increased in thymus or bone marrow, sites of V(D)J recombination.

It localises to the nucleus. Functionally, nuclease involved in DNA non-homologous end joining (NHEJ); required for double-strand break repair and V(D)J recombination. Required for V(D)J recombination, the process by which exons encoding the antigen-binding domains of immunoglobulins and T-cell receptor proteins are assembled from individual V, (D), and J gene segments. V(D)J recombination is initiated by the lymphoid specific RAG endonuclease complex, which generates site specific DNA double strand breaks (DSBs). These DSBs present two types of DNA end structures: hairpin sealed coding ends and phosphorylated blunt signal ends. These ends are independently repaired by the non homologous end joining (NHEJ) pathway to form coding and signal joints respectively. This protein exhibits single-strand specific 5'-3' exonuclease activity in isolation and acquires endonucleolytic activity on 5' and 3' hairpins and overhangs when in a complex with PRKDC. The latter activity is required specifically for the resolution of closed hairpins prior to the formation of the coding joint. Also required for the repair of complex DSBs induced by ionizing radiation, which require substantial end-processing prior to religation by NHEJ. This chain is Protein artemis, found in Homo sapiens (Human).